The chain runs to 89 residues: Small ribosomal subunit protein uS15 (89 aa).

It belongs to the universal ribosomal protein uS15 family. Part of the 30S ribosomal subunit. Forms a bridge to the 50S subunit in the 70S ribosome, contacting the 23S rRNA.

One of the primary rRNA binding proteins, it binds directly to 16S rRNA where it helps nucleate assembly of the platform of the 30S subunit by binding and bridging several RNA helices of the 16S rRNA. In terms of biological role, forms an intersubunit bridge (bridge B4) with the 23S rRNA of the 50S subunit in the ribosome. This chain is Small ribosomal subunit protein uS15, found in Hamiltonella defensa subsp. Acyrthosiphon pisum (strain 5AT).